Here is a 151-residue protein sequence, read N- to C-terminus: uncharacterized protein (151 aa).

This is an uncharacterized protein from Methanocaldococcus jannaschii (strain ATCC 43067 / DSM 2661 / JAL-1 / JCM 10045 / NBRC 100440) (Methanococcus jannaschii).